Reading from the N-terminus, the 83-residue chain is Ferredoxin (83 aa).

4Fe-4S ferredoxin-type domains are found at residues 2–29 (ALMITDECINCDVCEPECPNGAISQGDE) and 31–64 (YVIEPSLCTECVGHYETSQCVEVCPVDCIIKDPS). [4Fe-4S] cluster is bound by residues C9, C12, C15, C19, C38, C41, C50, and C54.

It depends on [4Fe-4S] cluster as a cofactor.

Its function is as follows. Ferredoxins are iron-sulfur proteins that transfer electrons in a wide variety of metabolic reactions. The sequence is that of Ferredoxin (fdx) from Allochromatium vinosum (strain ATCC 17899 / DSM 180 / NBRC 103801 / NCIMB 10441 / D) (Chromatium vinosum).